The primary structure comprises 491 residues: Protein nucleotidyltransferase YdiU (491 aa).

8 residues coordinate ATP: G88, G90, R91, K111, D123, G124, R174, and R181. Residue D250 is the Proton acceptor of the active site. Mg(2+) contacts are provided by N251 and D260. D260 lines the ATP pocket.

The protein belongs to the SELO family. It depends on Mg(2+) as a cofactor. Mn(2+) is required as a cofactor.

The enzyme catalyses L-seryl-[protein] + ATP = 3-O-(5'-adenylyl)-L-seryl-[protein] + diphosphate. It catalyses the reaction L-threonyl-[protein] + ATP = 3-O-(5'-adenylyl)-L-threonyl-[protein] + diphosphate. The catalysed reaction is L-tyrosyl-[protein] + ATP = O-(5'-adenylyl)-L-tyrosyl-[protein] + diphosphate. It carries out the reaction L-histidyl-[protein] + UTP = N(tele)-(5'-uridylyl)-L-histidyl-[protein] + diphosphate. The enzyme catalyses L-seryl-[protein] + UTP = O-(5'-uridylyl)-L-seryl-[protein] + diphosphate. It catalyses the reaction L-tyrosyl-[protein] + UTP = O-(5'-uridylyl)-L-tyrosyl-[protein] + diphosphate. Nucleotidyltransferase involved in the post-translational modification of proteins. It can catalyze the addition of adenosine monophosphate (AMP) or uridine monophosphate (UMP) to a protein, resulting in modifications known as AMPylation and UMPylation. This chain is Protein nucleotidyltransferase YdiU, found in Rhodopseudomonas palustris (strain BisB18).